A 203-amino-acid polypeptide reads, in one-letter code: LexA repressor (203 aa).

Positions 30–50 (VREICQAVSLKSTSTVHGHLK) form a DNA-binding region, H-T-H motif. Residues Ser127 and Lys164 each act as for autocatalytic cleavage activity in the active site.

This sequence belongs to the peptidase S24 family. As to quaternary structure, homodimer.

It catalyses the reaction Hydrolysis of Ala-|-Gly bond in repressor LexA.. Functionally, represses a number of genes involved in the response to DNA damage (SOS response), including recA and lexA. In the presence of single-stranded DNA, RecA interacts with LexA causing an autocatalytic cleavage which disrupts the DNA-binding part of LexA, leading to derepression of the SOS regulon and eventually DNA repair. The chain is LexA repressor from Clostridium perfringens (strain ATCC 13124 / DSM 756 / JCM 1290 / NCIMB 6125 / NCTC 8237 / Type A).